Consider the following 320-residue polypeptide: Glutaminyl-peptide cyclotransferase (320 aa).

The span at M1–K12 shows a compositional bias: basic residues. Residues M1–S22 form a disordered region. Residues M1–R36 are Cytoplasmic-facing. The chain crosses the membrane as a helical; Signal-anchor for type II membrane protein span at residues F37–F57. Residues N58–V320 lie on the Lumenal side of the membrane. N-linked (GlcNAc...) asparagine glycans are attached at residues N99 and N163.

The protein belongs to the plant glutaminyl-peptide cyclotransferase family. Glycosylated.

Its subcellular location is the endoplasmic reticulum membrane. The catalysed reaction is N-terminal L-glutaminyl-[peptide] = N-terminal 5-oxo-L-prolyl-[peptide] + NH4(+). Its function is as follows. Converts glutamine and N-terminal glutamyl residues in peptides to 5-oxoproline and 5-oxoproline residues. Not involved in the major pathway for 5-oxoproline production. This is Glutaminyl-peptide cyclotransferase (QCT) from Arabidopsis thaliana (Mouse-ear cress).